Here is a 486-residue protein sequence, read N- to C-terminus: ATP-dependent rRNA helicase rrp3 (486 aa).

Residues 1 to 60 (MSSVKRRKTDKNPSLEGLKSKKTKESKKESHTPSPEPIEDTEDNRVIEETEEAEEDDAPK) form a disordered region. Residues 60 to 88 (KSFKDLGIVDSLCEACDTLGYKAPTPIQR) carry the Q motif motif. The region spanning 91-262 (IPLALQGRDL…RASLKDPLRV (172 aa)) is the Helicase ATP-binding domain. 104-111 (AETGSGKT) is an ATP binding site. The DEAD box motif lies at 210–213 (DEAD). The 149-residue stretch at 286–434 (HKDTYLIYLL…EYPTVKDEVM (149 aa)) folds into the Helicase C-terminal domain. Composition is skewed to basic and acidic residues over residues 447–460 (ARNEMKNLHEDRGK) and 476–486 (RGRDEMDREEG). The segment at 447 to 486 (ARNEMKNLHEDRGKKGAVLKGRRPANGAKRGRDEMDREEG) is disordered.

The protein belongs to the DEAD box helicase family. DDX47/RRP3 subfamily. As to quaternary structure, interacts with the SSU processome.

It localises to the nucleus. It catalyses the reaction ATP + H2O = ADP + phosphate + H(+). Functionally, ATP-dependent rRNA helicase required for pre-ribosomal RNA processing. Involved in the maturation of the 35S-pre-rRNA and to its cleavage to mature 18S rRNA. The chain is ATP-dependent rRNA helicase rrp3 from Botryotinia fuckeliana (strain B05.10) (Noble rot fungus).